The chain runs to 496 residues: Glycine receptor subunit beta (496 aa).

An N-terminal signal peptide occupies residues methionine 1–alanine 22. At lysine 23 to phenylalanine 268 the chain is on the extracellular side. The segment at glycine 32–proline 53 is disordered. The N-linked (GlcNAc...) asparagine glycan is linked to asparagine 54. Glycine-binding residues include arginine 108 and serine 174. A disulfide bridge connects residues cysteine 183 and cysteine 197. N-linked (GlcNAc...) asparagine glycosylation is present at asparagine 242. Cysteines 243 and 255 form a disulfide. Threonine 250 contacts glycine. Residues tyrosine 269–tryptophan 289 traverse the membrane as a helical segment. Residues isoleucine 290–alanine 294 are Cytoplasmic-facing. The helical transmembrane segment at serine 295–threonine 315 threads the bilayer. At leucine 316–lysine 327 the chain is on the extracellular side. A helical transmembrane segment spans residues alanine 328 to valine 349. Residues valine 350–arginine 471 lie on the Cytoplasmic side of the membrane. Phosphothreonine is present on threonine 391. Residues isoleucine 472 to tyrosine 495 form a helical membrane-spanning segment. Leucine 496 is a topological domain (extracellular).

This sequence belongs to the ligand-gated ion channel (TC 1.A.9) family. Glycine receptor (TC 1.A.9.3) subfamily. GLRB sub-subfamily. Forms heteropentamers with glycin receptor alpha subunits. Heteropentamers with GLRA1 can be composed of two GLRA1 and three GLRB subunits, or three GLRA1 and two GLRB subunits, or four GLRA1 subunits and one GLRB subunit. Forms heteropentamers with GLRA2. Functional GLRB-GLRA2 heteropentamers contain four GLRA2 subunits and one GLRB subunit, although alternative subunit composition cannot be excluded. Forms a heteropentamer with GLRA3. Interacts with GPHN. Detected in spinal cord, brain and brain stem, especially in the periolivary region, spinal nuclei, trigeminal nucleus, medulla oblongata, pons and midbrain. Detected in the inner plexiform layer of the retina (at protein level). High levels of expression in cortex, hippocampus, thalamus and cerebellum. Detected in spinal cord.

It is found in the postsynaptic cell membrane. It localises to the synapse. The protein localises to the cell projection. The protein resides in the dendrite. Its subcellular location is the cell membrane. It is found in the cytoplasm. It catalyses the reaction chloride(in) = chloride(out). Channel opening is triggered by extracellular glycine. Heteropentameric channels composed of GLRB and GLRA1 are activated by lower glycine levels than homopentameric GLRA1. Functionally, subunit of heteromeric glycine-gated chloride channels. Plays an important role in the down-regulation of neuronal excitability. Contributes to the generation of inhibitory postsynaptic currents. The chain is Glycine receptor subunit beta (Glrb) from Mus musculus (Mouse).